A 488-amino-acid polypeptide reads, in one-letter code: Eukaryotic translation initiation factor 3 subunit L (488 aa).

Disordered regions lie at residues Met-1–Gln-34 and Ser-427–Glu-449. Over residues Gln-7–Pro-16 the composition is skewed to basic and acidic residues. Positions Asp-17–Met-27 are enriched in acidic residues. The region spanning Asp-256–Ile-450 is the PCI domain. The span at Leu-431 to Gln-440 shows a compositional bias: basic and acidic residues.

This sequence belongs to the eIF-3 subunit L family. Component of the eukaryotic translation initiation factor 3 (eIF-3) complex.

It is found in the cytoplasm. Its function is as follows. Component of the eukaryotic translation initiation factor 3 (eIF-3) complex, which is involved in protein synthesis of a specialized repertoire of mRNAs and, together with other initiation factors, stimulates binding of mRNA and methionyl-tRNAi to the 40S ribosome. The eIF-3 complex specifically targets and initiates translation of a subset of mRNAs involved in cell proliferation. The chain is Eukaryotic translation initiation factor 3 subunit L from Phaeosphaeria nodorum (strain SN15 / ATCC MYA-4574 / FGSC 10173) (Glume blotch fungus).